Consider the following 352-residue polypeptide: D-arabitol-phosphate dehydrogenase (352 aa).

Mn(2+) contacts are provided by cysteine 43, histidine 65, cysteine 96, cysteine 99, cysteine 102, cysteine 110, and glutamate 151.

It belongs to the zinc-containing alcohol dehydrogenase family. In terms of assembly, homotetramer. Mn(2+) is required as a cofactor.

The catalysed reaction is D-arabinitol 1-phosphate + NAD(+) = D-xylulose 5-phosphate + NADH + H(+). Its activity is regulated as follows. Inhibited by EDTA, 4-hydroxymercuribenzoic acid (PHMB), mercury and zinc ions at a concentration of 2 mM. In terms of biological role, involved in the arabitol catabolism via the arabitol phosphate route. Catalyzes only the transformation of D-arabitol 1-phosphate (Arb1P) and D-arabitol 5-phosphate (Arb5P) into D-xylulose 5-phosphate (Xlu5P) and ribulose 5-phosphate, respectively. It can use both NAD and NADP. In Enterococcus avium (Streptococcus avium), this protein is D-arabitol-phosphate dehydrogenase.